A 368-amino-acid chain; its full sequence is Branched-chain-amino-acid aminotransferase (368 aa).

R101 is a pyridoxal 5'-phosphate binding site. K204 carries the post-translational modification N6-(pyridoxal phosphate)lysine. Pyridoxal 5'-phosphate is bound by residues Y209 and 271 to 272; that span reads IT. K299 participates in a covalent cross-link: Isoglutamyl lysine isopeptide (Lys-Gln) (interchain with Q-Cter in protein Pup). T314 is a pyridoxal 5'-phosphate binding site.

This sequence belongs to the class-IV pyridoxal-phosphate-dependent aminotransferase family. Homodimer. Requires pyridoxal 5'-phosphate as cofactor.

The catalysed reaction is L-isoleucine + 2-oxoglutarate = (S)-3-methyl-2-oxopentanoate + L-glutamate. It carries out the reaction L-valine + 2-oxoglutarate = 3-methyl-2-oxobutanoate + L-glutamate. The enzyme catalyses L-leucine + 2-oxoglutarate = 4-methyl-2-oxopentanoate + L-glutamate. Its pathway is amino-acid biosynthesis; L-isoleucine biosynthesis; L-isoleucine from 2-oxobutanoate: step 4/4. The protein operates within amino-acid biosynthesis; L-leucine biosynthesis; L-leucine from 3-methyl-2-oxobutanoate: step 4/4. It participates in amino-acid biosynthesis; L-valine biosynthesis; L-valine from pyruvate: step 4/4. With respect to regulation, inhibited by ammonium sulfate at millimolar concentrations and by O-benzylhydroxylamine (Obe). In terms of biological role, catalyzes the reversible transfers of an amino group from glutamate to the alpha-ketoacid of the respective amino acid in the final step in the biosynthesis of branchedchain amino acids. The amino acids can be ranked in the following order with respect to their efficiency as amino donor: Leu &gt; Ile &gt; Val. This is Branched-chain-amino-acid aminotransferase (ilvE) from Mycolicibacterium smegmatis (strain ATCC 700084 / mc(2)155) (Mycobacterium smegmatis).